The chain runs to 474 residues: Alpha-galactosidase (474 aa).

Positions 1–22 (MINFSLLTSIVLLASKVVGVSP) are cleaved as a signal peptide. 2 cysteine pairs are disulfide-bonded: cysteine 43–cysteine 75 and cysteine 122–cysteine 152. N-linked (GlcNAc...) asparagine glycosylation is present at asparagine 44. Substrate contacts are provided by aspartate 73, aspartate 74, and lysine 148. Residue aspartate 150 is the Nucleophile of the active site. Asparagine 176 is a glycosylation site (N-linked (GlcNAc...) asparagine). Arginine 206 contacts substrate. Aspartate 210 acts as the Proton donor in catalysis. Disulfide bonds link cysteine 222-cysteine 238 and cysteine 224-cysteine 231. Glutamine 252 contacts substrate. N-linked (GlcNAc...) asparagine glycans are attached at residues asparagine 271, asparagine 414, asparagine 423, asparagine 436, and asparagine 455.

Belongs to the glycosyl hydrolase 27 family. In terms of assembly, homotetramer.

The protein resides in the secreted. The enzyme catalyses Hydrolysis of terminal, non-reducing alpha-D-galactose residues in alpha-D-galactosides, including galactose oligosaccharides, galactomannans and galactolipids.. In Torulaspora delbrueckii (Yeast), this protein is Alpha-galactosidase (MEL).